We begin with the raw amino-acid sequence, 155 residues long: Small ribosomal subunit protein uS7 (155 aa).

Belongs to the universal ribosomal protein uS7 family. Part of the 30S ribosomal subunit. Contacts proteins S9 and S11.

In terms of biological role, one of the primary rRNA binding proteins, it binds directly to 16S rRNA where it nucleates assembly of the head domain of the 30S subunit. Is located at the subunit interface close to the decoding center, probably blocks exit of the E-site tRNA. In Thermotoga neapolitana (strain ATCC 49049 / DSM 4359 / NBRC 107923 / NS-E), this protein is Small ribosomal subunit protein uS7.